The chain runs to 300 residues: UDP-N-acetylenolpyruvoylglucosamine reductase (300 aa).

One can recognise an FAD-binding PCMH-type domain in the interval 30 to 194; sequence RVGGPADFFV…IGATFVLDSD (165 aa). Arg174 is an active-site residue. The Proton donor role is filled by Ser223. Glu293 is an active-site residue.

This sequence belongs to the MurB family. The cofactor is FAD.

The protein resides in the cytoplasm. The catalysed reaction is UDP-N-acetyl-alpha-D-muramate + NADP(+) = UDP-N-acetyl-3-O-(1-carboxyvinyl)-alpha-D-glucosamine + NADPH + H(+). The protein operates within cell wall biogenesis; peptidoglycan biosynthesis. Cell wall formation. In Geobacter sulfurreducens (strain ATCC 51573 / DSM 12127 / PCA), this protein is UDP-N-acetylenolpyruvoylglucosamine reductase.